A 160-amino-acid polypeptide reads, in one-letter code: Cytochrome b6-f complex subunit 4 (160 aa).

The next 3 helical transmembrane spans lie at 36–56 (LLYT…GLAV), 95–115 (LLGV…PFIE), and 131–151 (TVFL…TLPI).

Belongs to the cytochrome b family. PetD subfamily. As to quaternary structure, the 4 large subunits of the cytochrome b6-f complex are cytochrome b6, subunit IV (17 kDa polypeptide, petD), cytochrome f and the Rieske protein, while the 4 small subunits are petG, petL, petM and petN. The complex functions as a dimer.

The protein resides in the plastid. It localises to the chloroplast thylakoid membrane. Its function is as follows. Component of the cytochrome b6-f complex, which mediates electron transfer between photosystem II (PSII) and photosystem I (PSI), cyclic electron flow around PSI, and state transitions. The sequence is that of Cytochrome b6-f complex subunit 4 from Mesostigma viride (Green alga).